Here is a 1058-residue protein sequence, read N- to C-terminus: Vacuolar protein sorting-associated protein 54 (1058 aa).

Residues 369–389 are a coiled coil; the sequence is SKKIVEVHERYEQKKKLLAKL.

It belongs to the VPS54 family. In terms of assembly, component of the Golgi-associated retrograde protein (GARP) complex, also called VFT (VPS fifty-three) complex, composed of vps-51, vps-52, vps-53 and vps-54. Within the complex interacts with vps-52 and vps-53.

Its subcellular location is the golgi apparatus. The protein resides in the trans-Golgi network. Acts as a component of the GARP complex that is involved in retrograde transport from early and late endosomes to the trans-Golgi network (TGN). The GARP complex facilitates tethering as well as SNARE complex assembly at the Golgi. This chain is Vacuolar protein sorting-associated protein 54, found in Caenorhabditis elegans.